The chain runs to 432 residues: MTDTETVLVAGGQDWNEIVEAARGADPGERIVVNMGPQHPSTHGVLRLILEIEGETVTEARCGIGYLHTGIEKNLEYRYWTQGVTFVTRMDYLSPFFNETAYCLGVEKLLGITDEIPERVNVIRVMMMELNRISSHLVALATGGMELGAMTPMFVGFRAREIILSLFESITGLRMNSAYIRPGGVAQDLPPDGPTEIAKAIADLRQPLREMGDLLNENAIWKARTQDVGYLDLAGCMALGITGPILRSTGLPHDLRKSEPYCGYENYEFDVITADGCDAYGRYMIRVKEMWESIKIVEQCLDRLRPGPTMIEDRKLAWPADLKVGPDGMGNSPEHIAKIMGSSMEALIHHFKLVTEGIRVPAGQVYVAVESPRGELGVHMVSDGGTRPYRVHYRDPSFTNLQAVAAMSEGGMVADLITAVASIDPVMGGVDR.

It belongs to the complex I 49 kDa subunit family. In terms of assembly, NDH-1 is composed of 14 different subunits. Subunits NuoB, C, D, E, F, and G constitute the peripheral sector of the complex.

The protein localises to the cell membrane. It carries out the reaction a quinone + NADH + 5 H(+)(in) = a quinol + NAD(+) + 4 H(+)(out). In terms of biological role, NDH-1 shuttles electrons from NADH, via FMN and iron-sulfur (Fe-S) centers, to quinones in the respiratory chain. The immediate electron acceptor for the enzyme in this species is believed to be a menaquinone. Couples the redox reaction to proton translocation (for every two electrons transferred, four hydrogen ions are translocated across the cytoplasmic membrane), and thus conserves the redox energy in a proton gradient. The chain is NADH-quinone oxidoreductase subunit D from Mycobacterium marinum (strain ATCC BAA-535 / M).